Here is a 288-residue protein sequence, read N- to C-terminus: Proteasome assembly chaperone 1 (288 aa).

The tract at residues 1 to 37 is disordered; sequence MAATFFGEVVKAPCRAGTEDEEEEDEGRRETPEDREV. Residue A2 is modified to N-acetylalanine. A Phosphothreonine modification is found at T18. Residues 26 to 37 show a composition bias toward basic and acidic residues; it reads EGRRETPEDREV. T54 is subject to Phosphothreonine. S180 is subject to Phosphoserine. Residue K264 is modified to N6-acetyllysine.

This sequence belongs to the PSMG1 family. In terms of assembly, forms a heterodimer with PSMG2. The PSMG1-PSMG2 heterodimer interacts directly with the PSMA5 and PSMA7 proteasome alpha subunits. Degraded by the proteasome upon completion of 20S proteasome maturation.

It is found in the cytoplasm. The protein resides in the endoplasmic reticulum. Its function is as follows. Chaperone protein which promotes assembly of the 20S proteasome as part of a heterodimer with PSMG2. The PSMG1-PSMG2 heterodimer binds to the PSMA5 and PSMA7 proteasome subunits, promotes assembly of the proteasome alpha subunits into the heteroheptameric alpha ring and prevents alpha ring dimerization. In Callithrix jacchus (White-tufted-ear marmoset), this protein is Proteasome assembly chaperone 1 (PSMG1).